Consider the following 403-residue polypeptide: S-adenosylmethionine synthase (403 aa).

An ATP-binding site is contributed by His15. Residue Asp17 coordinates Mg(2+). A K(+)-binding site is contributed by Glu43. Glu56 and Gln99 together coordinate L-methionine. Residues 99 to 109 (QSPDINQGVDR) form a flexible loop region. ATP-binding positions include 166 to 168 (DAK), 232 to 233 (KF), Asp241, 247 to 248 (RK), Ala264, and Lys268. Asp241 provides a ligand contact to L-methionine. Lys272 is a binding site for L-methionine.

Belongs to the AdoMet synthase family. In terms of assembly, homotetramer; dimer of dimers. Mg(2+) is required as a cofactor. K(+) serves as cofactor.

The protein resides in the cytoplasm. The enzyme catalyses L-methionine + ATP + H2O = S-adenosyl-L-methionine + phosphate + diphosphate. It participates in amino-acid biosynthesis; S-adenosyl-L-methionine biosynthesis; S-adenosyl-L-methionine from L-methionine: step 1/1. Functionally, catalyzes the formation of S-adenosylmethionine (AdoMet) from methionine and ATP. The overall synthetic reaction is composed of two sequential steps, AdoMet formation and the subsequent tripolyphosphate hydrolysis which occurs prior to release of AdoMet from the enzyme. The polypeptide is S-adenosylmethionine synthase (Xanthomonas campestris pv. campestris (strain ATCC 33913 / DSM 3586 / NCPPB 528 / LMG 568 / P 25)).